A 3164-amino-acid chain; its full sequence is Protein eyes shut homolog (3164 aa).

Residues 1-21 (MTDKSIIILSLMVFHSSFING) form the signal peptide. Residues N42, N105, N117, and N166 are each glycosylated (N-linked (GlcNAc...) asparagine). EGF-like domains are found at residues 170-212 (KQQF…KYCQ), 213-254 (ELDA…KNCS), and 256-292 (IIGQ…PFCE). Cystine bridges form between C174–C189, C183–C200, C202–C211, C217–C228, C222–C242, C244–C253, C260–C270, C265–C280, and C282–C291. 4 N-linked (GlcNAc...) asparagine glycosylation sites follow: N225, N252, N269, and N272. Residues N311 and N343 are each glycosylated (N-linked (GlcNAc...) asparagine). EGF-like domains are found at residues 332–368 (DVSE…LLCK) and 370–406 (IQTS…KNCE). 5 cysteine pairs are disulfide-bonded: C336–C347, C341–C356, C358–C367, C374–C385, and C396–C405. A glycan (N-linked (GlcNAc...) asparagine) is linked at N382. N-linked (GlcNAc...) asparagine glycans are attached at residues N506, N521, and N566. Residues 567–602 (TTDDQENECQHEAICKDEINRPRCSCSLSYIGRLCV) form the EGF-like 6 domain. 2 disulfides stabilise this stretch: C575/C590 and C592/C601. N-linked (GlcNAc...) asparagine glycans are attached at residues N611 and N654. One can recognise an EGF-like 7 domain in the interval 643–679 (DTEDCKSVSCKNGTTSIHLRGYFFCKCVPGFKGTQRE). Intrachain disulfides connect C652–C667, C685–C696, C690–C705, C707–C719, C737–C748, and C742–C757. The EGF-like 8; calcium-binding domain maps to 681-720 (DIDECASHPCKNGATCIDQPGNYFCQCVPPFKVVDGFSCL). The EGF-like 9; calcium-binding domain maps to 733–769 (DIDDCILNACEHNSTCKDLHLSYQCVCLSGWEGNFSE). N745, N766, N782, N783, and N805 each carry an N-linked (GlcNAc...) asparagine glycan. The EGF-like 10; calcium-binding domain occupies 771 to 807 (ESNECKMNPCKNNSTCIDLYKSYRCECTSGWTGQNCS). Intrachain disulfides connect C775-C786, C780-C795, C797-C806, C813-C824, C818-C835, C837-C846, C853-C866, C860-C876, C878-C887, C894-C905, C899-C914, C916-C925, C932-C943, C937-C952, C954-C963, C970-C981, C975-C990, C992-C1001, C1008-C1019, C1013-C1028, C1030-C1039, C1046-C1056, C1051-C1065, C1067-C1076, C1083-C1094, C1088-C1103, C1105-C1114, C1121-C1137, C1131-C1147, C1149-C1158, C1165-C1176, C1170-C1185, and C1187-C1196. EGF-like domains follow at residues 809 to 847 (EINE…RFCH), 849 to 888 (RYNP…KNCE), and 890 to 926 (DVKE…SLCE). 2 N-linked (GlcNAc...) asparagine glycosylation sites follow: N862 and N863. The EGF-like 14; calcium-binding domain maps to 928–964 (EINECSSEPCKNNGTCVDLTNRFFCNCEPGYHGPFCE). N940 carries an N-linked (GlcNAc...) asparagine glycan. In terms of domain architecture, EGF-like 15 spans 966–1002 (DVNKCKISPCLDEENCVYRTDGYNCLCAPGYTGINCE). The region spanning 1004 to 1040 (NLDECLSEPCLHDGVCIDGINHYTCDCKSGFFGTHCE) is the EGF-like 16; calcium-binding domain. 3 consecutive EGF-like domains span residues 1042 to 1077 (NAND…TQCK), 1079 to 1115 (KIND…AYCE), and 1117 to 1159 (SIDN…QFCE). Residues 1161–1197 (NINECSSSPCLHGADCEDHINGYVCKCQPGWSGHHCE) form the EGF-like 20; calcium-binding domain. Residues N1509, N1522, N1906, N1941, N1960, and N2033 are each glycosylated (N-linked (GlcNAc...) asparagine). In terms of domain architecture, Laminin G-like 1 spans 1883 to 2063 (FSCVRYYGDS…AVKNYHINNC (181 aa)). Intrachain disulfides connect C2037/C2063, C2103/C2114, C2108/C2128, and C2130/C2139. The region spanning 2099–2140 (APSVCQQDVCHNGGTCHPIFLSRGIVSFQCDCPLHFTGRFCE) is the EGF-like 21 domain. In terms of domain architecture, Laminin G-like 2 spans 2145–2339 (LFFPSFNGNS…NIENCHVPWC (195 aa)). N-linked (GlcNAc...) asparagine glycans are attached at residues N2170, N2185, and N2228. 6 disulfide bridges follow: C2308-C2339, C2339-C2350, C2344-C2359, C2375-C2386, C2380-C2396, and C2398-C2407. 2 EGF-like domains span residues 2335-2368 (HVPW…YSGK) and 2371-2408 (QFAS…PLCT). The N-linked (GlcNAc...) asparagine glycan is linked to N2347. N2412, N2453, N2484, N2506, and N2532 each carry an N-linked (GlcNAc...) asparagine glycan. In terms of domain architecture, Laminin G-like 3 spans 2419–2609 (SGTDAFGYTS…PNAGRSVGQC (191 aa)). Intrachain disulfides connect C2576-C2609, C2614-C2625, and C2619-C2634. EGF-like domains are found at residues 2610 to 2646 (HASP…AFCT) and 2648 to 2689 (TVST…IYCE). N2635 carries an N-linked (GlcNAc...) asparagine glycan. Intrachain disulfides connect C2636–C2645, C2652–C2668, C2662–C2677, and C2679–C2688. Positions 2717–2895 (DPSFRSNELS…AKGGSNVGDC (179 aa)) constitute a Laminin G-like 4 domain. N2775, N2800, and N2824 each carry an N-linked (GlcNAc...) asparagine glycan. Cystine bridges form between C2868-C2895, C2900-C2911, C2905-C2920, and C2922-C2931. EGF-like domains are found at residues 2896–2932 (DGTA…NTCN) and 2933–2970 (QSVY…RYCE). N2914 carries N-linked (GlcNAc...) asparagine glycosylation. N-linked (GlcNAc...) asparagine glycosylation is present at N2932. 3 cysteine pairs are disulfide-bonded: C2937/C2948, C2942/C2958, and C2960/C2969. The N-linked (GlcNAc...) asparagine glycan is linked to N2951. N-linked (GlcNAc...) asparagine glycosylation is found at N2971, N3006, N3036, N3057, N3073, and N3082. The Laminin G-like 5 domain maps to 2975–3164 (FSTAKFMGNS…YDGDEQNEVT (190 aa)).

This sequence belongs to the EYS family.

It localises to the cell projection. Its subcellular location is the cilium. The protein resides in the photoreceptor outer segment. The protein localises to the cytoplasm. It is found in the cytoskeleton. It localises to the cilium axoneme. Its subcellular location is the microtubule organizing center. The protein resides in the centrosome. The protein localises to the secreted. It is found in the extracellular space. It localises to the extracellular matrix. Its subcellular location is the interphotoreceptor matrix. Its function is as follows. Required to maintain the integrity of photoreceptor cells. Specifically required for normal morphology of the photoreceptor ciliary pocket, and might thus facilitate protein trafficking between the photoreceptor inner and outer segments via the transition zone. This is Protein eyes shut homolog (EYS) from Pongo abelii (Sumatran orangutan).